Reading from the N-terminus, the 1411-residue chain is DNA-directed RNA polymerase subunit beta' (1411 aa).

Zn(2+)-binding residues include Cys-69, Cys-71, Cys-84, and Cys-87. Asp-461, Asp-463, and Asp-465 together coordinate Mg(2+). The Zn(2+) site is built by Cys-809, Cys-883, Cys-890, and Cys-893.

Belongs to the RNA polymerase beta' chain family. The RNAP catalytic core consists of 2 alpha, 1 beta, 1 beta' and 1 omega subunit. When a sigma factor is associated with the core the holoenzyme is formed, which can initiate transcription. It depends on Mg(2+) as a cofactor. Requires Zn(2+) as cofactor.

The catalysed reaction is RNA(n) + a ribonucleoside 5'-triphosphate = RNA(n+1) + diphosphate. Its function is as follows. DNA-dependent RNA polymerase catalyzes the transcription of DNA into RNA using the four ribonucleoside triphosphates as substrates. The protein is DNA-directed RNA polymerase subunit beta' of Ehrlichia ruminantium (strain Welgevonden).